Here is a 345-residue protein sequence, read N- to C-terminus: Phosphoribosylformylglycinamidine cyclo-ligase (345 aa).

It belongs to the AIR synthase family.

Its subcellular location is the cytoplasm. The catalysed reaction is 2-formamido-N(1)-(5-O-phospho-beta-D-ribosyl)acetamidine + ATP = 5-amino-1-(5-phospho-beta-D-ribosyl)imidazole + ADP + phosphate + H(+). The protein operates within purine metabolism; IMP biosynthesis via de novo pathway; 5-amino-1-(5-phospho-D-ribosyl)imidazole from N(2)-formyl-N(1)-(5-phospho-D-ribosyl)glycinamide: step 2/2. In Pectobacterium atrosepticum (strain SCRI 1043 / ATCC BAA-672) (Erwinia carotovora subsp. atroseptica), this protein is Phosphoribosylformylglycinamidine cyclo-ligase.